Reading from the N-terminus, the 437-residue chain is Chloride intracellular channel protein 5 (437 aa).

A compositionally biased stretch (polar residues) spans 1-14 (MNDENYSTTIYNRV). The interval 1–197 (MNDENYSTTI…VSEGNESASA (197 aa)) is disordered. The span at 34–45 (DEVHEDVRREDN) shows a compositional bias: basic and acidic residues. Repeat copies occupy residues 118-125 (QSDSEEPQ), 126-133 (ASDPEEPQ), 134-141 (ASDPEEPQ), and 142-149 (GPDPEEPQ). The 4 X 8 AA tandem repeats of [AGQ]-[SP]-D-[PS]-E-E-P-Q stretch occupies residues 118 to 149 (QSDSEEPQASDPEEPQASDPEEPQGPDPEEPQ). Over residues 121 to 157 (SEEPQASDPEEPQASDPEEPQGPDPEEPQENGNEMEA) the composition is skewed to acidic residues. A compositionally biased stretch (polar residues) spans 161–184 (SPSSFTIQNSRAFSTREISPTSYS). A G-site motif is present at residues 217–220 (CPFS). Residues 219 to 239 (FSQRLFMILWLKGVVFNVTTV) traverse the membrane as a helical segment. The GST C-terminal domain maps to 263 to 427 (NGDVKTDVNK…AADSEIELAY (165 aa)).

The protein belongs to the chloride channel CLIC family. As to quaternary structure, component of a multimeric complex consisting of several cytoskeletal proteins, including actin, ezrin, alpha-actinin, gelsolin, and IQGAP1. Interacts with AKAP9. Interacts with TPRN. TPRN, CLIC5 and PTPQR form concentric rings at the base of stereocilia and may form a complex. Interacts with EZR, MYO6 and RDX; the proteins may work together as a complex to stabilize linkages between the plasma membrane and subjacent actin cytoskeleton at the stereocilium base. In terms of processing, phosphorylated. As to expression, expressed in most tissues. Higher levels found in kidney, heart, skeletal muscle, T84 and PANC-1 cells.

It localises to the golgi apparatus. It is found in the cytoplasm. The protein localises to the cytoskeleton. The protein resides in the microtubule organizing center. Its subcellular location is the centrosome. It localises to the cell cortex. It is found in the membrane. The protein localises to the apical cell membrane. The protein resides in the mitochondrion. Its subcellular location is the cell projection. It localises to the stereocilium. It carries out the reaction Na(+)(in) = Na(+)(out). The catalysed reaction is K(+)(in) = K(+)(out). It catalyses the reaction chloride(in) = chloride(out). Its activity is regulated as follows. Inhibited by F-actin. In the soluble state, catalyzes glutaredoxin-like thiol disulfide exchange reactions with reduced glutathione as electron donor. Can insert into membranes and form non-selective ion channels almost equally permeable to Na(+), K(+) and Cl(-). Required for normal hearing. It is necessary for the formation of stereocilia in the inner ear and normal development of the organ of Corti. May play a role in the regulation of transepithelial ion absorption and secretion. Is required for the development and/or maintenance of the proper glomerular endothelial cell and podocyte architecture. Plays a role in formation of the lens suture in the eye, which is important for normal optical properties of the lens. The chain is Chloride intracellular channel protein 5 (CLIC5) from Bos taurus (Bovine).